A 117-amino-acid polypeptide reads, in one-letter code: UPF0102 protein Rsph17029_0461 (117 aa).

This sequence belongs to the UPF0102 family.

The protein is UPF0102 protein Rsph17029_0461 of Cereibacter sphaeroides (strain ATCC 17029 / ATH 2.4.9) (Rhodobacter sphaeroides).